A 266-amino-acid chain; its full sequence is Type 1 encapsulin shell protein (266 aa).

It belongs to the encapsulin family. Family 1 subfamily. This encapsulin nanocompartment is formed by 60 subunits; monomers form 12 pentamers which assemble to form shells. Shells are loaded with 4 encapsulated ferritin-like protein decamers (EncFtn) in a tetrahedral arrangement. A 3 nm gap is consistently seen between the shell and the cargo.

It is found in the encapsulin nanocompartment. Its function is as follows. Shell component of a type 1 encapsulin nanocompartment. Assembles into proteinaceous shells about 21 nm in diameter. Small pores form at, or close to, the 2-, 3-, and 5-fold symmetry axes. Data analysis suggests the 5-fold pores open and close with maximal and minimal aperatures of 15 and 5 Angstroms. Cargo protein Fer (ferritin-like protein, probably stores iron) is targeted to the interior via its C-terminal extension; empty intact shells can be isolated in the absence of cargo protein. The polypeptide is Type 1 encapsulin shell protein (Haliangium ochraceum (strain DSM 14365 / JCM 11303 / SMP-2)).